We begin with the raw amino-acid sequence, 587 residues long: Ankyrin repeat and SOCS box protein 14 (587 aa).

ANK repeat units follow at residues 82–112 (IGWI…SLWE), 117–146 (NGET…NPNA), 150–179 (EGNS…DVNL), 183–212 (NERT…HPDP), 216–245 (YGFT…IFCL), 248–277 (DSSS…DANI), 281–310 (SGHL…LAAI), 313–342 (SGIS…DVNF), 355–384 (HRKS…LPNQ), 385–414 (DPVN…NVNY), and 416–449 (CRVN…DTER). An SOCS box domain is found at 521–576 (WSEIHFILTNPRSLKHLCRLKIRKCMGRLHLRCPVFMSFLPLPNRLKAYVLYKEYD).

The protein belongs to the ankyrin SOCS box (ASB) family. In terms of assembly, interacts with MAPRE2; this interaction promotes MAPRE2 degradation.

It participates in protein modification; protein ubiquitination. Its function is as follows. May be a substrate-recognition component of a SCF-like ECS (Elongin-Cullin-SOCS-box protein) E3 ubiquitin-protein ligase complex which mediates the ubiquitination and subsequent proteasomal degradation of target proteins. Plays a role in the inhibition of cardiomyocyte nuclear proliferation by mediating the ubiquitination and degradation of MAPRE2. In Homo sapiens (Human), this protein is Ankyrin repeat and SOCS box protein 14 (ASB14).